The chain runs to 239 residues: Orotidine 5'-phosphate decarboxylase (239 aa).

Substrate is bound by residues Asp15, Lys37, 64–73 (DLKYHDIPNT), Thr126, Arg187, Gln196, Gly216, and Arg217. The Proton donor role is filled by Lys66.

This sequence belongs to the OMP decarboxylase family. Type 1 subfamily. As to quaternary structure, homodimer.

It carries out the reaction orotidine 5'-phosphate + H(+) = UMP + CO2. It functions in the pathway pyrimidine metabolism; UMP biosynthesis via de novo pathway; UMP from orotate: step 2/2. Functionally, catalyzes the decarboxylation of orotidine 5'-monophosphate (OMP) to uridine 5'-monophosphate (UMP). The protein is Orotidine 5'-phosphate decarboxylase of Geotalea daltonii (strain DSM 22248 / JCM 15807 / FRC-32) (Geobacter daltonii).